A 299-amino-acid chain; its full sequence is ATP phosphoribosyltransferase (299 aa).

Belongs to the ATP phosphoribosyltransferase family. Long subfamily. Mg(2+) serves as cofactor.

It localises to the cytoplasm. It catalyses the reaction 1-(5-phospho-beta-D-ribosyl)-ATP + diphosphate = 5-phospho-alpha-D-ribose 1-diphosphate + ATP. The protein operates within amino-acid biosynthesis; L-histidine biosynthesis; L-histidine from 5-phospho-alpha-D-ribose 1-diphosphate: step 1/9. Its activity is regulated as follows. Feedback inhibited by histidine. Catalyzes the condensation of ATP and 5-phosphoribose 1-diphosphate to form N'-(5'-phosphoribosyl)-ATP (PR-ATP). Has a crucial role in the pathway because the rate of histidine biosynthesis seems to be controlled primarily by regulation of HisG enzymatic activity. This is ATP phosphoribosyltransferase from Shewanella sp. (strain ANA-3).